A 126-amino-acid chain; its full sequence is UPF0325 protein VFMJ11_2099 (126 aa).

Belongs to the UPF0325 family.

This Aliivibrio fischeri (strain MJ11) (Vibrio fischeri) protein is UPF0325 protein VFMJ11_2099.